The following is a 438-amino-acid chain: Glycosyl hydrolase family 109 protein (438 aa).

Residues 1-33 (MDKTSRRDLLKLASLAGIGAGLARSQGSSKSMA) constitute a signal peptide (tat-type signal). NAD(+) contacts are provided by residues 52-53 (GR), aspartate 74, 125-128 (WVWH), 145-146 (EV), and asparagine 174. Residues tyrosine 203, arginine 221, 233-236 (YPTH), and tyrosine 315 contribute to the substrate site. Tyrosine 233 lines the NAD(+) pocket. The segment at 408 to 438 (GPLSEASVANGSAPQKFPDFTRGKWQTRQPV) is disordered.

This sequence belongs to the Gfo/Idh/MocA family. Glycosyl hydrolase 109 subfamily. Requires NAD(+) as cofactor. Predicted to be exported by the Tat system. The position of the signal peptide cleavage has not been experimentally proven.

Glycosidase. This is Glycosyl hydrolase family 109 protein from Solibacter usitatus (strain Ellin6076).